The chain runs to 862 residues: Rab GTPase-binding effector protein 1 (862 aa).

The residue at position 2 (A2) is an N-acetylalanine. Residues 11 to 345 (DVSLQQRVAE…KKTDTEEEVK (335 aa)) are a coiled coil. N6-acetyllysine is present on K282. Residues 315–374 (ELKKKDQEEDEQQRVNKRKDNKKTDTEEEVKIPVVCALTQEESSTPLSNEEEHLDSTHGS) form a disordered region. Residues 336-345 (KKTDTEEEVK) are compositionally biased toward basic and acidic residues. S374, S377, and S407 each carry phosphoserine. Position 408 is a phosphothreonine (T408). Position 410 is a phosphoserine (S410). The stretch at 534 to 816 (DMCSNYEKQL…LQTELDVSEQ (283 aa)) forms a coiled coil.

The protein belongs to the rabaptin family. As to quaternary structure, heterodimer with RABGEF1. The heterodimer binds RAB4A and RAB5A that have been activated by GTP-binding. Interacts with TSC2. Interacts with GGA1 (via GAE domain), GGA2 (via GAE domain) and GGA3 (via GAE domain). Interacts with AP1G1 (via GAE domain). Interacts with AP1G2 (via GAE domain). Interacts with ECPAS. Interacts with KCNH1. Interacts with PKD1 (via C-terminal domain) and GGA1; the interactions recruit PKD1:PKD2 complex to GGA1 and ARL3 at trans-Golgi network. Interacts with KCNH1. Proteolytic cleavage by caspases in apoptotic cells causes loss of endosome fusion activity.

The protein resides in the cytoplasm. Its subcellular location is the early endosome. It localises to the recycling endosome. The protein localises to the cytoplasmic vesicle. Its function is as follows. Rab effector protein acting as linker between gamma-adaptin, RAB4A and RAB5A. Involved in endocytic membrane fusion and membrane trafficking of recycling endosomes. Involved in KCNH1 channels trafficking to and from the cell membrane. Stimulates RABGEF1 mediated nucleotide exchange on RAB5A. Mediates the traffic of PKD1:PKD2 complex from the endoplasmic reticulum through the Golgi to the cilium. In Mus musculus (Mouse), this protein is Rab GTPase-binding effector protein 1 (Rabep1).